The following is a 380-amino-acid chain: Cytochrome b (380 aa).

The next 4 membrane-spanning stretches (helical) occupy residues 34-54 (FGSL…LLAA), 78-99 (WLIR…YLHI), 114-134 (WNTG…GYVL), and 179-199 (FFTL…IHLT). Residues His-84 and His-98 each coordinate heme b. Heme b is bound by residues His-183 and His-197. His-202 contributes to the a ubiquinone binding site. 4 consecutive transmembrane segments (helical) span residues 227 to 247 (LKDI…ALFS), 289 to 309 (LGGV…PLLH), 321 to 341 (FSQL…WVGS), and 348 to 368 (FIII…ILFP).

Belongs to the cytochrome b family. As to quaternary structure, the cytochrome bc1 complex contains 11 subunits: 3 respiratory subunits (MT-CYB, CYC1 and UQCRFS1), 2 core proteins (UQCRC1 and UQCRC2) and 6 low-molecular weight proteins (UQCRH/QCR6, UQCRB/QCR7, UQCRQ/QCR8, UQCR10/QCR9, UQCR11/QCR10 and a cleavage product of UQCRFS1). This cytochrome bc1 complex then forms a dimer. Requires heme b as cofactor.

Its subcellular location is the mitochondrion inner membrane. Functionally, component of the ubiquinol-cytochrome c reductase complex (complex III or cytochrome b-c1 complex) that is part of the mitochondrial respiratory chain. The b-c1 complex mediates electron transfer from ubiquinol to cytochrome c. Contributes to the generation of a proton gradient across the mitochondrial membrane that is then used for ATP synthesis. This is Cytochrome b (MT-CYB) from Bugeranus carunculatus (Wattled crane).